The following is a 267-amino-acid chain: Chaperone protein MyfB (267 aa).

An N-terminal signal peptide occupies residues 1–34 (MKYKFSHNFISYNLFLFVFMSLILLPYSHASSMG). Residues Cys127 and Cys164 are joined by a disulfide bond.

The protein belongs to the periplasmic pilus chaperone family.

It is found in the periplasm. In terms of biological role, required for the biogenesis of the MyfA fimbria. The sequence is that of Chaperone protein MyfB (myfB) from Yersinia enterocolitica.